Consider the following 356-residue polypeptide: Protein-glutamate methylesterase/protein-glutamine glutaminase 4 (356 aa).

A Response regulatory domain is found at 15 to 132; sequence RVLVVDDSAV…SVGEMTADLV (118 aa). Asp66 bears the 4-aspartylphosphate mark. Residues 162–348 enclose the CheB-type methylesterase domain; sequence ARTTLQVVAI…PLDRIAPEIL (187 aa). Residues Ser174, His200, and Asp296 contribute to the active site.

It belongs to the CheB family. Phosphorylated by CheA. Phosphorylation of the N-terminal regulatory domain activates the methylesterase activity.

It localises to the cytoplasm. It catalyses the reaction [protein]-L-glutamate 5-O-methyl ester + H2O = L-glutamyl-[protein] + methanol + H(+). The catalysed reaction is L-glutaminyl-[protein] + H2O = L-glutamyl-[protein] + NH4(+). Involved in chemotaxis. Part of a chemotaxis signal transduction system that modulates chemotaxis in response to various stimuli. Catalyzes the demethylation of specific methylglutamate residues introduced into the chemoreceptors (methyl-accepting chemotaxis proteins or MCP) by CheR. Also mediates the irreversible deamidation of specific glutamine residues to glutamic acid. This is Protein-glutamate methylesterase/protein-glutamine glutaminase 4 from Anaeromyxobacter dehalogenans (strain 2CP-C).